A 325-amino-acid chain; its full sequence is Probable WRKY transcription factor 11 (325 aa).

A DNA-binding region (WRKY) is located at residues 240–306 (KIADIPPDEY…YEGEHRHNQS (67 aa)).

Belongs to the WRKY group II-d family. In young, mature and senescent leaves.

The protein localises to the nucleus. Functionally, transcription factor. Interacts specifically with the W box (5'-(T)TGAC[CT]-3'), a frequently occurring elicitor-responsive cis-acting element. Regulates rhizobacterium B.cereus AR156-induced systemic resistance (ISR) to P.syringae pv. tomato DC3000, probably by activating the jasmonic acid (JA)- signaling pathway. The protein is Probable WRKY transcription factor 11 (WRKY11) of Arabidopsis thaliana (Mouse-ear cress).